We begin with the raw amino-acid sequence, 277 residues long: Methylamine utilization protein MauF (277 aa).

The next 7 helical transmembrane spans lie at 33–53 (IAVL…LASA), 59–79 (LWAV…WSPC), 111–131 (YGLG…IAGF), 132–152 (SGFG…YGAH), 179–199 (WVIG…YVQT), 205–225 (MTLA…VALF), and 257–277 (ALAD…LALI).

The protein resides in the cell membrane. It participates in one-carbon metabolism; methylamine degradation. The protein is Methylamine utilization protein MauF (mauF) of Paracoccus denitrificans.